The primary structure comprises 115 residues: Large ribosomal subunit protein uL18 (115 aa).

Belongs to the universal ribosomal protein uL18 family. As to quaternary structure, part of the 50S ribosomal subunit; part of the 5S rRNA/L5/L18/L25 subcomplex. Contacts the 5S and 23S rRNAs.

Functionally, this is one of the proteins that bind and probably mediate the attachment of the 5S RNA into the large ribosomal subunit, where it forms part of the central protuberance. The chain is Large ribosomal subunit protein uL18 from Vesicomyosocius okutanii subsp. Calyptogena okutanii (strain HA).